The sequence spans 282 residues: 4-hydroxybenzoate octaprenyltransferase (282 aa).

The next 9 membrane-spanning stretches (helical) occupy residues 17–37 (IGIL…NQGF), 40–60 (IDLL…GCVI), 90–110 (AFIL…KLPI), 113–133 (FYFA…KRFL), 135–155 (APQL…FIAS), 163–183 (FIVL…MYAM), 207–227 (LIIA…AINK), 231–251 (WFFY…LKLI), and 262–282 (AFLV…LALI).

It belongs to the UbiA prenyltransferase family. It depends on Mg(2+) as a cofactor.

The protein localises to the cell inner membrane. The enzyme catalyses all-trans-octaprenyl diphosphate + 4-hydroxybenzoate = 4-hydroxy-3-(all-trans-octaprenyl)benzoate + diphosphate. The protein operates within cofactor biosynthesis; ubiquinone biosynthesis. In terms of biological role, catalyzes the prenylation of para-hydroxybenzoate (PHB) with an all-trans polyprenyl group. Mediates the second step in the final reaction sequence of ubiquinone-8 (UQ-8) biosynthesis, which is the condensation of the polyisoprenoid side chain with PHB, generating the first membrane-bound Q intermediate 3-octaprenyl-4-hydroxybenzoate. The chain is 4-hydroxybenzoate octaprenyltransferase from Legionella pneumophila (strain Corby).